Consider the following 348-residue polypeptide: MSSVFSYFNESWMLLLATVFGLAFFLGIFLGRPVISWLKKQNHYDQVHKEHCEKLEALHQDKKNTPTAGGILFCIVLLTTVFLWLPLGKLSTWLFVFLIISWGTLGWYDDIIKKERKKGHGITAKQKFVIQLIISAITIVTIFSIYKGSALFCTLQVPFFGTVSVGHSILGKFFYFVLAMLTIVGTSNAVNLTDGLDGLAAGTTCMSALGLLVVALSNPTMPLAQDVSIVLSALIGISFAFLKYNRAPAQVFMGDTGSLLIGGVLGSCAVMLRAELLLILLGGVFVAEAGSVILQVGSCRLRKKRIFLCSPLHHHYEYKGISETKVVARFYIAGLLCMILGIIAALWR.

Helical transmembrane passes span 11–31 (SWML…IFLG), 68–88 (AGGI…LPLG), 92–112 (TWLF…DDII), 128–148 (FVIQ…IYKG), 165–185 (VGHS…TIVG), 196–216 (LDGL…VVAL), 222–242 (PLAQ…FAFL), 251–271 (VFMG…CAVM), 276–296 (LLLI…ILQV), and 326–346 (VVAR…IAAL).

Belongs to the glycosyltransferase 4 family. MraY subfamily. Mg(2+) serves as cofactor.

The protein localises to the cell inner membrane. It carries out the reaction UDP-N-acetyl-alpha-D-muramoyl-L-alanyl-gamma-D-glutamyl-meso-2,6-diaminopimeloyl-D-alanyl-D-alanine + di-trans,octa-cis-undecaprenyl phosphate = di-trans,octa-cis-undecaprenyl diphospho-N-acetyl-alpha-D-muramoyl-L-alanyl-D-glutamyl-meso-2,6-diaminopimeloyl-D-alanyl-D-alanine + UMP. It participates in cell wall biogenesis; peptidoglycan biosynthesis. Functionally, catalyzes the initial step of the lipid cycle reactions in the biosynthesis of the cell wall peptidoglycan: transfers peptidoglycan precursor phospho-MurNAc-pentapeptide from UDP-MurNAc-pentapeptide onto the lipid carrier undecaprenyl phosphate, yielding undecaprenyl-pyrophosphoryl-MurNAc-pentapeptide, known as lipid I. This chain is Phospho-N-acetylmuramoyl-pentapeptide-transferase, found in Chlamydia caviae (strain ATCC VR-813 / DSM 19441 / 03DC25 / GPIC) (Chlamydophila caviae).